The sequence spans 65 residues: Large ribosomal subunit protein bL32 (65 aa).

The interval 1–45 is disordered; the sequence is MAVQQNKKTPSKRGMRRAHDVLKKPTFSVDFSSGETHRRHHVTPD.

It belongs to the bacterial ribosomal protein bL32 family.

The protein is Large ribosomal subunit protein bL32 of Nitrosococcus oceani (strain ATCC 19707 / BCRC 17464 / JCM 30415 / NCIMB 11848 / C-107).